The following is a 443-amino-acid chain: MSEMTPREIVSELDSYIIGQHKAKRAVSIALRNRWRRMQLDEALRHEVTPKNILMIGPTGVGKTEIARRLAKLANAPFIKVEATKFTEVGYVGKEVDSIIRDLTDSAIKMVRHQSIEKNRFRAEEMAEDRILDVLIPPAKNNWGQAEGTQEPSATRQAFRKKLREGQLDDKEIEIDLAASPVGVEIMAPPGMEEMTNQLQSMFQNLAGQKQKAHKVKIKDAFKLLIEEEAAKLVNPEELKQQAIEAVEQHGIVFIDEIDKICKRGESSGPDVSREGVQRDLLPLVEGCTVSTKHGMVKTDHILFIASGAFQVASPSDLIPELQGRLPIRVELQALTTEDFERILTEPSASLTEQYKALMATEGVDISFTADGIRRIAEAAWQVNESTENIGARRLHTVMERLIEDVSYDASEMNGQSVIIDADYVRSHLDELVADEDLSRFIL.

ATP contacts are provided by residues isoleucine 18, 60 to 65 (GVGKTE), aspartate 256, glutamate 321, and arginine 393.

Belongs to the ClpX chaperone family. HslU subfamily. A double ring-shaped homohexamer of HslV is capped on each side by a ring-shaped HslU homohexamer. The assembly of the HslU/HslV complex is dependent on binding of ATP.

Its subcellular location is the cytoplasm. Its function is as follows. ATPase subunit of a proteasome-like degradation complex; this subunit has chaperone activity. The binding of ATP and its subsequent hydrolysis by HslU are essential for unfolding of protein substrates subsequently hydrolyzed by HslV. HslU recognizes the N-terminal part of its protein substrates and unfolds these before they are guided to HslV for hydrolysis. The protein is ATP-dependent protease ATPase subunit HslU of Pectobacterium atrosepticum (strain SCRI 1043 / ATCC BAA-672) (Erwinia carotovora subsp. atroseptica).